Here is a 273-residue protein sequence, read N- to C-terminus: Large ribosomal subunit protein uL2 (273 aa).

Positions 221–263 (RGTAMNPVDHPHGGGEGRNFGKHPVTPWGVQTKGKKTRHNKRT) are disordered. Positions 253-263 (KGKKTRHNKRT) are enriched in basic residues.

It belongs to the universal ribosomal protein uL2 family. Part of the 50S ribosomal subunit. Forms a bridge to the 30S subunit in the 70S ribosome.

One of the primary rRNA binding proteins. Required for association of the 30S and 50S subunits to form the 70S ribosome, for tRNA binding and peptide bond formation. It has been suggested to have peptidyltransferase activity; this is somewhat controversial. Makes several contacts with the 16S rRNA in the 70S ribosome. The protein is Large ribosomal subunit protein uL2 of Histophilus somni (strain 129Pt) (Haemophilus somnus).